The primary structure comprises 483 residues: MDYLVTIGLEIHAQILTRSKMFCGCSADYAHAPPNTHVCPVCMGLPGALPVPNRRAIELAALTGLALNCRISNENVISRKNYFYADLPSGYQRSQYDDPLCVDGWVEIEGDHGPKRIGLTRVHIEEDTGKLVHTNDGGSLVDFNRAGVPLMEIVSKPDLSSPEEARRYFQKLRQILVWIGVNSGDMESGALRCDANVSVRPVGQQEYGAKVEIKNINSFRFVERALAYEIERQIRALKAGEPIVQSTRGWDETSGTTVAQRTKEFAEDYRYFPEPDIPPLHLTDVWIAERRAELPELPDARRRRFIEEYELTAYDAGVLTDERAVSDFYEQAVAAARIRGVTPKDVANWMTGEFFRLLKETGETLEIAAQRLRPDYIGEVQELLNQGVITRTSAKEAFEASFREGRSPATIVAERGLAVIGAGDALTDLVRQAITGNPKVVEEYRRGKATAIKFLIGQVMKASRGQANPQAVQQALEQELARE.

Belongs to the GatB/GatE family. GatB subfamily. As to quaternary structure, heterotrimer of A, B and C subunits.

The catalysed reaction is L-glutamyl-tRNA(Gln) + L-glutamine + ATP + H2O = L-glutaminyl-tRNA(Gln) + L-glutamate + ADP + phosphate + H(+). It carries out the reaction L-aspartyl-tRNA(Asn) + L-glutamine + ATP + H2O = L-asparaginyl-tRNA(Asn) + L-glutamate + ADP + phosphate + 2 H(+). Its function is as follows. Allows the formation of correctly charged Asn-tRNA(Asn) or Gln-tRNA(Gln) through the transamidation of misacylated Asp-tRNA(Asn) or Glu-tRNA(Gln) in organisms which lack either or both of asparaginyl-tRNA or glutaminyl-tRNA synthetases. The reaction takes place in the presence of glutamine and ATP through an activated phospho-Asp-tRNA(Asn) or phospho-Glu-tRNA(Gln). The sequence is that of Aspartyl/glutamyl-tRNA(Asn/Gln) amidotransferase subunit B from Roseiflexus castenholzii (strain DSM 13941 / HLO8).